Reading from the N-terminus, the 309-residue chain is tRNA pseudouridine synthase B (309 aa).

Catalysis depends on Asp39, which acts as the Nucleophile.

Belongs to the pseudouridine synthase TruB family. Type 1 subfamily.

It carries out the reaction uridine(55) in tRNA = pseudouridine(55) in tRNA. Responsible for synthesis of pseudouridine from uracil-55 in the psi GC loop of transfer RNAs. In Bacillus licheniformis (strain ATCC 14580 / DSM 13 / JCM 2505 / CCUG 7422 / NBRC 12200 / NCIMB 9375 / NCTC 10341 / NRRL NRS-1264 / Gibson 46), this protein is tRNA pseudouridine synthase B.